The primary structure comprises 688 residues: MASTPLLVELGAEELPPSAIEPLALALRDGIAKGLADADVAFASAHAYATPRRLAVRVEGLDDKQPDRDIERRGPALAAAFKDGQPTKAAEGFARSCGVTVDDLIHLETDKGTWLGYRYQESGEATTALLPAIVERAVQALPVPKNMRWGASRTEFSRPVHWLVMLYGADVVPATVLGLEAGRTTRGHRFHAPDAIDLAHADDYLDALENAYVLADMQRRRERIREQVLAEAEVNEATAVIDEDLLDEVSGLVEWPVALTGSFDERFLDVPAECLISSMKANQKYFHLLDAQGTLKPLFITVSNIESRDPQQVIEGNEKVIRPRLADAAFFYDTDRKQSLASRRSALESVVFQQSLGTLADKAQRIEAISSFIASRIGGDADHASRAAQLAKCDLVTEMVLEFPELQGIMGTYYARQDGEPEEVAQALHEQYLPRFASDDVPATPAGLALALADRLDTLTGIFGIGQRPSGTKDPFALRRAAIGVLNILVKAELDLDLRELLELAAAQHGDLPKAEGLVDDVLDYMLDRFRAWTQDEGIAVEVYLAVRARPVTRPLDFARRIRAVHAFSQREEAVALAAANKRVSNILSKQQHDGSTSVDTGLLQAEAETTLSTALEQCHQSVRPLLDAARYAEALDVLAQLRGPVDAFFEDVMVMAEDEAVRRNRLALLASLQSLFLEVADIAQLQQ.

This sequence belongs to the class-II aminoacyl-tRNA synthetase family. As to quaternary structure, tetramer of two alpha and two beta subunits.

The protein localises to the cytoplasm. The enzyme catalyses tRNA(Gly) + glycine + ATP = glycyl-tRNA(Gly) + AMP + diphosphate. This chain is Glycine--tRNA ligase beta subunit, found in Chromohalobacter salexigens (strain ATCC BAA-138 / DSM 3043 / CIP 106854 / NCIMB 13768 / 1H11).